The following is a 67-amino-acid chain: DNA-directed RNA polymerase subunit omega (67 aa).

This sequence belongs to the RNA polymerase subunit omega family. As to quaternary structure, the RNAP catalytic core consists of 2 alpha, 1 beta, 1 beta' and 1 omega subunit. When a sigma factor is associated with the core the holoenzyme is formed, which can initiate transcription.

It carries out the reaction RNA(n) + a ribonucleoside 5'-triphosphate = RNA(n+1) + diphosphate. Its function is as follows. Promotes RNA polymerase assembly. Latches the N- and C-terminal regions of the beta' subunit thereby facilitating its interaction with the beta and alpha subunits. This chain is DNA-directed RNA polymerase subunit omega, found in Listeria welshimeri serovar 6b (strain ATCC 35897 / DSM 20650 / CCUG 15529 / CIP 8149 / NCTC 11857 / SLCC 5334 / V8).